The chain runs to 505 residues: Nicotinamide phosphoribosyltransferase (505 aa).

Arg196 serves as a coordination point for diphosphate. Asp219 contacts beta-nicotinamide D-ribonucleotide. His246 and Arg314 together coordinate diphosphate. Beta-nicotinamide D-ribonucleotide is bound by residues 314–316 (RPD), 369–370 (GD), and Arg408.

It belongs to the NAPRTase family.

It carries out the reaction beta-nicotinamide D-ribonucleotide + diphosphate = 5-phospho-alpha-D-ribose 1-diphosphate + nicotinamide + H(+). It participates in cofactor biosynthesis; NAD(+) biosynthesis; nicotinamide D-ribonucleotide from 5-phospho-alpha-D-ribose 1-diphosphate and nicotinamide: step 1/1. Its activity is regulated as follows. 10-fold more active in the presence of saturating ATP. Its function is as follows. Catalyzes the condensation of nicotinamide with 5-phosphoribosyl-1-pyrophosphate to yield nicotinamide mononucleotide, an intermediate in the biosynthesis of NAD. Functions in the nondeamidating salvage pathway for production of NAD from nicotinamide. Displays a strict preference for nicotinamide over nicotinate substrate. The polypeptide is Nicotinamide phosphoribosyltransferase (Acinetobacter baylyi (strain ATCC 33305 / BD413 / ADP1)).